A 604-amino-acid polypeptide reads, in one-letter code: uncharacterized protein (604 aa).

The N-terminal stretch at 1-40 is a signal peptide; it reads MWLQQRIKVFPGLLSSSWARRVLAVSGFLVIIYWYIFSGS. The Extracellular segment spans residues 41 to 563; sequence HYRSFWYSGK…EEHMAKQYRG (523 aa). N-linked (GlcNAc...) asparagine glycosylation occurs at N337. The chain crosses the membrane as a helical span at residues 564–584; it reads LPFLFWFSVASLITLFHLFLF. Over 585 to 604 the chain is Cytoplasmic; it reads KLIYNEYCGPGAKPLFRSKV.

Its subcellular location is the membrane. This is an uncharacterized protein from Xenopus laevis (African clawed frog).